The primary structure comprises 886 residues: Alanine--tRNA ligase (886 aa).

4 residues coordinate Zn(2+): His570, His574, Cys673, and His677.

The protein belongs to the class-II aminoacyl-tRNA synthetase family. Requires Zn(2+) as cofactor.

It is found in the cytoplasm. It carries out the reaction tRNA(Ala) + L-alanine + ATP = L-alanyl-tRNA(Ala) + AMP + diphosphate. Functionally, catalyzes the attachment of alanine to tRNA(Ala) in a two-step reaction: alanine is first activated by ATP to form Ala-AMP and then transferred to the acceptor end of tRNA(Ala). Also edits incorrectly charged Ser-tRNA(Ala) and Gly-tRNA(Ala) via its editing domain. This Chlorobium chlorochromatii (strain CaD3) protein is Alanine--tRNA ligase.